The sequence spans 307 residues: Probable E3 SUMO-protein ligase RNF212 (307 aa).

An RING-type zinc finger spans residues 7-46 (CNRCFQSPHRKSSFSLTSCGHVYCHSCLLKGTKNECVICQ). Residues 91–124 (RRRLVAFYQEKISQLEESLRKSVLQIKQLQSMRS) are a coiled coil. The interval 164 to 291 (LTPPARKPEM…KMSPFLPSTP (128 aa)) is disordered. Polar residues-rich tracts occupy residues 202–213 (LSLTPSHASMTK), 233–252 (SQLS…SSWT), and 259–271 (ISIS…QCAG).

As to expression, specifically expressed in meiocytes of the gonads.

The protein localises to the nucleus. It is found in the chromosome. It functions in the pathway protein modification; protein sumoylation. Its function is as follows. SUMO E3 ligase that acts as a regulator of crossing-over during meiosis: required to couple chromosome synapsis to the formation of crossover-specific recombination complexes. Localizes to recombination sites and stabilizes meiosis-specific recombination factors, such as MutS-gamma complex proteins (MSH4 and MSH5) and TEX11. May mediate sumoylation of target proteins MSH4 and/or MSH5, leading to enhance their binding to recombination sites. Acts as a limiting factor for crossover designation and/or reinforcement and plays an antagonist role with CCNB1IP1/HEI10 in the regulation of meiotic recombination. The protein is Probable E3 SUMO-protein ligase RNF212 (Rnf212) of Mus musculus (Mouse).